Consider the following 2345-residue polypeptide: Acetyl-CoA carboxylase 1 (2345 aa).

Met-1 carries the post-translational modification N-acetylmethionine. Phosphoserine occurs at positions 5, 23, 25, 29, 34, 47, 49, and 52. Thr-57 carries the post-translational modification Phosphothreonine. Ser-77 bears the Phosphoserine mark. Phosphoserine; by AMPK is present on Ser-79. Positions 116 to 617 (VIEKVLIANN…DTGWLDRLIA (502 aa)) constitute a Biotin carboxylation domain. One can recognise an ATP-grasp domain in the interval 274–465 (SKRILNVPQD…LPAAQLQIAM (192 aa)). Residue 314–319 (GGGGKG) participates in ATP binding. Mg(2+)-binding residues include Glu-423, Glu-436, and Asn-438. 3 residues coordinate Mn(2+): Glu-423, Glu-436, and Asn-438. Arg-440 is a catalytic residue. Thr-609 is subject to Phosphothreonine. Residues 744–818 (FEKENDPSVM…DPGCVIAKMQ (75 aa)) form the Biotinyl-binding domain. Residue Lys-785 is modified to N6-biotinyllysine. At Ser-834 the chain carries Phosphoserine. 2 positions are modified to phosphoserine; by AMPK; in vitro: Ser-1200 and Ser-1215. Position 1217 is a phosphoserine (Ser-1217). Phosphothreonine is present on Thr-1226. Ser-1258, Ser-1262, and Ser-1272 each carry phosphoserine. Residue Lys-1333 is modified to N6-acetyllysine. The 339-residue stretch at 1575–1913 (PYVTKDLLQS…NVHSSVPLLN (339 aa)) folds into the CoA carboxyltransferase N-terminal domain. The segment at 1575–2233 (PYVTKDLLQS…EDLVKKKIHS (659 aa)) is carboxyltransferase. CoA is bound by residues Arg-1822, Lys-2126, and Arg-2128. Residues 1917-2233 (PIDRIIEFVP…EDLVKKKIHS (317 aa)) form the CoA carboxyltransferase C-terminal domain. Thr-2152 is modified (phosphothreonine).

Monomer, homodimer, and homotetramer. Can form filamentous polymers. Interacts in its inactive phosphorylated form with the BRCT domains of BRCA1 which prevents ACACA dephosphorylation and inhibits lipid synthesis. Interacts with MID1IP1; interaction with MID1IP1 promotes oligomerization and increases its activity. Mg(2+) serves as cofactor. Mn(2+) is required as a cofactor. It depends on biotin as a cofactor. Post-translationally, the N-terminus is blocked. Phosphorylation on Ser-1262 is required for interaction with BRCA1. In terms of processing, phosphorylation at Ser-79 by AMPK inactivates enzyme activity. Phosphorylated in vitro at Ser-1200 and Ser-1215 by AMPK; the relevance of phosphorylation of these sites in vivo is however unclear. Post-translationally, the biotin cofactor is covalently attached to the central biotinyl-binding domain and is required for the catalytic activity.

It is found in the cytoplasm. The protein resides in the cytosol. The catalysed reaction is hydrogencarbonate + acetyl-CoA + ATP = malonyl-CoA + ADP + phosphate + H(+). The protein operates within lipid metabolism; malonyl-CoA biosynthesis; malonyl-CoA from acetyl-CoA: step 1/1. Its activity is regulated as follows. Inhibited by phosphorylation. Citrate promotes oligomerization of the protein into filaments that correspond to the most active form of the carboxylase. Its function is as follows. Cytosolic enzyme that catalyzes the carboxylation of acetyl-CoA to malonyl-CoA, the first and rate-limiting step of de novo fatty acid biosynthesis. This is a 2 steps reaction starting with the ATP-dependent carboxylation of the biotin carried by the biotin carboxyl carrier (BCC) domain followed by the transfer of the carboxyl group from carboxylated biotin to acetyl-CoA. This Rattus norvegicus (Rat) protein is Acetyl-CoA carboxylase 1.